The following is a 200-amino-acid chain: Probable gluconokinase (200 aa).

Residue Gly-34–Thr-41 participates in ATP binding.

Belongs to the gluconokinase GntK/GntV family.

It carries out the reaction D-gluconate + ATP = 6-phospho-D-gluconate + ADP + H(+). Its pathway is carbohydrate acid metabolism; D-gluconate degradation. The protein is Probable gluconokinase of Dictyostelium discoideum (Social amoeba).